Consider the following 1097-residue polypeptide: Leukemia inhibitory factor receptor (1097 aa).

Positions 1-44 (MMNISLRLRRPPWMVDSNGRRMTSHFQWLLLTFILLYLMNQVTS) are cleaved as a signal peptide. Over 45-833 (EKRGAPRDLK…SMFVVTKENS (789 aa)) the chain is Extracellular. One can recognise a Fibronectin type-III 1 domain in the interval 46–131 (KRGAPRDLKC…ISKFTLNEKN (86 aa)). Cystine bridges form between C55–C65 and C82–C90. N-linked (GlcNAc...) asparagine glycans are attached at residues N85, N131, N143, N191, N243, and N303. A disulfide bridge connects residues C213 and C270. 5 consecutive Fibronectin type-III domains span residues 332–434 (PPDI…VYPR), 435–534 (IPTS…TEAI), 538–629 (GPDT…IPND), 627–719 (PNDD…IGYI), and 724–833 (PIVA…KENS). Cysteines 341 and 351 form a disulfide. 8 N-linked (GlcNAc...) asparagine glycosylation sites follow: N366, N390, N407, N426, N445, N471, N481, and N489. A disulfide bridge links C466 with C511. Residues 519-523 (WSKWS) carry the WSXWS motif motif. N-linked (GlcNAc...) asparagine glycans are attached at residues N572, N652, N663, N680, N729, and N787. Residues 834–854 (VGLIIAILIPVAVAVIVGVVT) traverse the membrane as a helical segment. Residues 855–1097 (SILCYRKREW…TNFFQNKPND (243 aa)) are Cytoplasmic-facing. The Box 1 motif signature appears at 869 to 877 (FYPDIPNPE). A Phosphoserine modification is found at S927. Disordered regions lie at residues 982–1005 (QPQAKPEEEQENDPVGGAGYKPQM) and 1022–1097 (LDKA…KPND). 2 stretches are compositionally biased toward polar residues: residues 1032–1067 (ANVNTWNLVSPDSPRSTDSNSEIVSFGSPCSINSRQ) and 1086–1097 (SFTNFFQNKPND). Position 1044 is a phosphoserine (S1044).

This sequence belongs to the type I cytokine receptor family. Type 2 subfamily. Heterodimer composed of LIFR and IL6ST. The heterodimer formed by LIFR and IL6ST interacts with the complex formed by CNTF and CNTFR.

Its subcellular location is the cell membrane. Its function is as follows. Signal-transducing molecule. May have a common pathway with IL6ST. The soluble form inhibits the biological activity of LIF by blocking its binding to receptors on target cells. The polypeptide is Leukemia inhibitory factor receptor (LIFR) (Canis lupus familiaris (Dog)).